The following is a 1014-amino-acid chain: NKSRKRRNRVSFLGAVTVEPPKPIPLTWKTEKPVWVNQWPLPKQKLEALHLLANEQLEKGHIEPSFSPWNSPVFVIQKKSGKWHTLTDLRAVNAVIQPMGPLQPGLPSPAMIPKDWPLIIIDLKDCFFTIPLAEQDCEKFAFTIPAINNKEPATRFQWKVLPQGMLNSPTICQTFVGRALQPVREKFSDCYIIHYIDDILCAAETKDKLIDCYTFLQAEVANAGLAIASDKIQTSTPFHYLGMQIENRKIKPQKIEIRKDTLKTLNDFQKLLGDINWIRPTLGIPTYAMSNLFSILRGDSDLNSQRILTPEATKEIKLVEEKIQSAQINRIDPLAPLQLLIFATAHSPTGIIIQNTDLVEWSFLPHSTVKTFTLYLDQIATLIGQTRLRITKLCGNDPDKIVVPLTKEQVRQAFINSGAWQIGLANFVGLIDNHYPKTKIFQFLKLTTWILPKITRREPLENALTVFTDGSSNGKAAYTGPKERVIKTPYQSAQRDELVAVITVLQDFDQPINIISDSAYVVQATRDVETALIKYSMDDQLNQLFNLLQQTVRKRNFPFYITYIRAHTNLPGPLTKANEQADLLVSSALIKAQELHALTHVNAAGLKNKFDVTWKQAKDIVQHCTQCQVLHLPTQEAGVNPRGLCPNALWQMDVTHVPSFGRLSYVHVTVDTYSHFIWATCQTGESTSHVKKHLLSCFAVMGVPEKIKTDNGPGYCSKAFQKFLSQWKISHTTGIPYNSQGQAIVERTNRTLKTQLVKQKEGGDSKECTTPQMQLNLALYTLNFLNIYRNQTTTSAEQHLTGKKNSPHEGKLIWWKDNKNKTWEIGKVITWGRGFACVSPGENQLPVWLPTRHLKFYNEPIGDAKKRASTEMVTPVTWMDNPIEVYVNDSIWVPGPIDDRCPAKPEEEGMMINISIGYRYPPICLGRAPGCLMPAVQNWLVEVPTVSPISRFTYHMVSGMSLRPRVNYLQDFSYQRSLKFRPKGKPCPKEIPKESKNTEVLVWEECVANSAVIL.

The 189-residue stretch at 57-245 (LEKGHIEPSF…TPFHYLGMQI (189 aa)) folds into the Reverse transcriptase domain. An LPQG motif is present at residues 161 to 164 (LPQG). The YXDD motif lies at 195–198 (YIDD). The region spanning 460–590 (LENALTVFTD…ADLLVSSALI (131 aa)) is the RNase H type-1 domain. Residues Asp-469, Glu-497, Asp-517, and Asp-582 each coordinate Mg(2+). The segment at 587-628 (SALIKAQELHALTHVNAAGLKNKFDVTWKQAKDIVQHCTQCQ) adopts an Integrase-type zinc-finger fold. Residues His-596, His-600, Cys-624, and Cys-627 each contribute to the Zn(2+) site. The 162-residue stretch at 642 to 803 (RGLCPNALWQ…TSAEQHLTGK (162 aa)) folds into the Integrase catalytic domain. The segment at residues 811 to 859 (KLIWWKDNKNKTWEIGKVITWGRGFACVSPGENQLPVWLPTRHLKFYNE) is a DNA-binding region (integrase-type).

The protein belongs to the beta type-B retroviral polymerase family. HERV class-II K(HML-2) pol subfamily.

It carries out the reaction DNA(n) + a 2'-deoxyribonucleoside 5'-triphosphate = DNA(n+1) + diphosphate. The enzyme catalyses Endonucleolytic cleavage to 5'-phosphomonoester.. Functionally, early post-infection, the reverse transcriptase converts the viral RNA genome into double-stranded viral DNA. The RNase H domain of the reverse transcriptase performs two functions. It degrades the RNA template and specifically removes the RNA primer from the RNA/DNA hybrid. Following nuclear import, the integrase catalyzes the insertion of the linear, double-stranded viral DNA into the host cell chromosome. Endogenous Pol proteins may have kept, lost or modified their original function during evolution. The protein is Endogenous retrovirus group K member 10 Pol protein (ERVK-10) of Homo sapiens (Human).